Reading from the N-terminus, the 164-residue chain is Cytochrome c-type biogenesis protein CcmE (164 aa).

Topologically, residues 1–8 (MNPRRKQR) are cytoplasmic. Residues 9–29 (LAVVGIIGFLIVSAVGLMLYA) traverse the membrane as a helical; Signal-anchor for type II membrane protein segment. Over 30–164 (LNDSIDLFYT…YESSNGAGSK (135 aa)) the chain is Periplasmic. Heme-binding residues include H128 and Y132. A disordered region spans residues 142–164 (KGIKHVKPENMPTYESSNGAGSK). The segment covering 154 to 164 (TYESSNGAGSK) has biased composition (polar residues).

It belongs to the CcmE/CycJ family.

The protein localises to the cell inner membrane. Heme chaperone required for the biogenesis of c-type cytochromes. Transiently binds heme delivered by CcmC and transfers the heme to apo-cytochromes in a process facilitated by CcmF and CcmH. In Alteromonas mediterranea (strain DSM 17117 / CIP 110805 / LMG 28347 / Deep ecotype), this protein is Cytochrome c-type biogenesis protein CcmE.